Reading from the N-terminus, the 892-residue chain is Translation initiation factor IF-2 (892 aa).

2 disordered regions span residues 32-102 and 114-300; these read LAQA…PGDA and KAPE…KQAE. The span at 35–48 shows a compositional bias: polar residues; sequence AGSSDTKNSPASKA. Residues 139-166 are compositionally biased toward basic and acidic residues; the sequence is QEEKKESSEETSPERVEETLIIRTRTEP. Positions 200–211 are enriched in low complexity; the sequence is AASTEETTQQQP. The span at 212–224 shows a compositional bias: polar residues; it reads RQNDAASYNNKQQ. Low complexity predominate over residues 225–238; the sequence is PSGTSSRPASSAPS. The span at 252–276 shows a compositional bias: basic and acidic residues; the sequence is RGSERDRSKRSDESVKAFTGRDRYG. Positions 397–566 constitute a tr-type G domain; it reads IRSPIVAFMG…ALQAEVLELK (170 aa). The G1 stretch occupies residues 406 to 413; sequence GHVDHGKT. Residue 406–413 coordinates GTP; sequence GHVDHGKT. The tract at residues 431–435 is G2; the sequence is AITQH. Residues 452–455 are G3; the sequence is DTPG. GTP-binding positions include 452 to 456 and 506 to 509; these read DTPGH and NKCD. The G4 stretch occupies residues 506 to 509; that stretch reads NKCD. The G5 stretch occupies residues 542-544; sequence SAK.

The protein belongs to the TRAFAC class translation factor GTPase superfamily. Classic translation factor GTPase family. IF-2 subfamily.

The protein resides in the cytoplasm. One of the essential components for the initiation of protein synthesis. Protects formylmethionyl-tRNA from spontaneous hydrolysis and promotes its binding to the 30S ribosomal subunits. Also involved in the hydrolysis of GTP during the formation of the 70S ribosomal complex. In Chlamydia trachomatis serovar A (strain ATCC VR-571B / DSM 19440 / HAR-13), this protein is Translation initiation factor IF-2.